The sequence spans 658 residues: Threonine--tRNA ligase (658 aa).

The TGS domain maps to 1-61 (MSDVRVIIQR…RDGESVEPVE (61 aa)). Residues 259–554 (DHRKLGNELD…LLEHYAGAFP (296 aa)) form a catalytic region. Residues Cys353, His404, and His531 each contribute to the Zn(2+) site.

This sequence belongs to the class-II aminoacyl-tRNA synthetase family. Homodimer. Requires Zn(2+) as cofactor.

The protein resides in the cytoplasm. It catalyses the reaction tRNA(Thr) + L-threonine + ATP = L-threonyl-tRNA(Thr) + AMP + diphosphate + H(+). Catalyzes the attachment of threonine to tRNA(Thr) in a two-step reaction: L-threonine is first activated by ATP to form Thr-AMP and then transferred to the acceptor end of tRNA(Thr). Also edits incorrectly charged L-seryl-tRNA(Thr). In Streptomyces griseus subsp. griseus (strain JCM 4626 / CBS 651.72 / NBRC 13350 / KCC S-0626 / ISP 5235), this protein is Threonine--tRNA ligase.